The sequence spans 83 residues: Small ribosomal subunit protein bS20 (83 aa).

Residues 1–21 (MPNIKSAIKRVRTTETAEERN) are disordered. A compositionally biased stretch (basic and acidic residues) spans 12–21 (RTTETAEERN).

The protein belongs to the bacterial ribosomal protein bS20 family.

In terms of biological role, binds directly to 16S ribosomal RNA. This Staphylococcus epidermidis (strain ATCC 35984 / DSM 28319 / BCRC 17069 / CCUG 31568 / BM 3577 / RP62A) protein is Small ribosomal subunit protein bS20.